Reading from the N-terminus, the 487-residue chain is Protein nucleotidyltransferase YdiU (487 aa).

Positions 85, 87, 88, 108, 120, 121, 171, and 178 each coordinate ATP. Residue aspartate 247 is the Proton acceptor of the active site. Residues asparagine 248 and aspartate 257 each contribute to the Mg(2+) site. Aspartate 257 provides a ligand contact to ATP.

Belongs to the SELO family. Mg(2+) is required as a cofactor. The cofactor is Mn(2+).

It carries out the reaction L-seryl-[protein] + ATP = 3-O-(5'-adenylyl)-L-seryl-[protein] + diphosphate. It catalyses the reaction L-threonyl-[protein] + ATP = 3-O-(5'-adenylyl)-L-threonyl-[protein] + diphosphate. The catalysed reaction is L-tyrosyl-[protein] + ATP = O-(5'-adenylyl)-L-tyrosyl-[protein] + diphosphate. The enzyme catalyses L-histidyl-[protein] + UTP = N(tele)-(5'-uridylyl)-L-histidyl-[protein] + diphosphate. It carries out the reaction L-seryl-[protein] + UTP = O-(5'-uridylyl)-L-seryl-[protein] + diphosphate. It catalyses the reaction L-tyrosyl-[protein] + UTP = O-(5'-uridylyl)-L-tyrosyl-[protein] + diphosphate. In terms of biological role, nucleotidyltransferase involved in the post-translational modification of proteins. It can catalyze the addition of adenosine monophosphate (AMP) or uridine monophosphate (UMP) to a protein, resulting in modifications known as AMPylation and UMPylation. The protein is Protein nucleotidyltransferase YdiU of Agrobacterium fabrum (strain C58 / ATCC 33970) (Agrobacterium tumefaciens (strain C58)).